Reading from the N-terminus, the 371-residue chain is Chaperone protein DnaJ (371 aa).

The 65-residue stretch at 5 to 69 (DYYEILGIAK…QKRAAYDQHG (65 aa)) folds into the J domain. A CR-type zinc finger spans residues 127 to 205 (GASKEIHITT…CRGQGKVEEP (79 aa)). Zn(2+) is bound by residues Cys140, Cys143, Cys157, Cys160, Cys179, Cys182, Cys193, and Cys196. CXXCXGXG motif repeat units lie at residues 140-147 (CEHCKGSG), 157-164 (CTTCRGVG), 179-186 (CPRCHGQG), and 193-200 (CRQCRGQG).

This sequence belongs to the DnaJ family. Homodimer. Zn(2+) is required as a cofactor.

It is found in the cytoplasm. Participates actively in the response to hyperosmotic and heat shock by preventing the aggregation of stress-denatured proteins and by disaggregating proteins, also in an autonomous, DnaK-independent fashion. Unfolded proteins bind initially to DnaJ; upon interaction with the DnaJ-bound protein, DnaK hydrolyzes its bound ATP, resulting in the formation of a stable complex. GrpE releases ADP from DnaK; ATP binding to DnaK triggers the release of the substrate protein, thus completing the reaction cycle. Several rounds of ATP-dependent interactions between DnaJ, DnaK and GrpE are required for fully efficient folding. Also involved, together with DnaK and GrpE, in the DNA replication of plasmids through activation of initiation proteins. This chain is Chaperone protein DnaJ, found in Hamiltonella defensa subsp. Acyrthosiphon pisum (strain 5AT).